Consider the following 238-residue polypeptide: Ribonuclease 3 (238 aa).

The RNase III domain maps to 4-127 (IEEFEKRLGY…TMGAIYLETG (124 aa)). Glu-40 contributes to the Mg(2+) binding site. Asp-44 is a catalytic residue. 2 residues coordinate Mg(2+): Asn-113 and Glu-116. Glu-116 is an active-site residue. The 70-residue stretch at 154 to 223 (DYKTALQELT…ARIALEIFHR (70 aa)) folds into the DRBM domain.

It belongs to the ribonuclease III family. Homodimer. Mg(2+) serves as cofactor.

The protein resides in the cytoplasm. It catalyses the reaction Endonucleolytic cleavage to 5'-phosphomonoester.. Its function is as follows. Digests double-stranded RNA. Involved in the processing of primary rRNA transcript to yield the immediate precursors to the large and small rRNAs (23S and 16S). Processes some mRNAs, and tRNAs when they are encoded in the rRNA operon. Processes pre-crRNA and tracrRNA of type II CRISPR loci if present in the organism. The chain is Ribonuclease 3 from Wolinella succinogenes (strain ATCC 29543 / DSM 1740 / CCUG 13145 / JCM 31913 / LMG 7466 / NCTC 11488 / FDC 602W) (Vibrio succinogenes).